A 259-amino-acid polypeptide reads, in one-letter code: Adenosylcobinamide-GDP ribazoletransferase (259 aa).

5 helical membrane passes run 43 to 63 (LAGAVITAPAGLLLALMLGLG), 64 to 84 (ASSMVAAFAAIGLQVLLTGAL), 116 to 136 (FGVLALVFGVGLRVAALASLV), 141 to 161 (PINVALVMIGIAAVSRALMVW), and 185 to 205 (TLYTALFLGLAVAVVTIAPVT).

This sequence belongs to the CobS family. Mg(2+) is required as a cofactor.

Its subcellular location is the cell inner membrane. The enzyme catalyses alpha-ribazole + adenosylcob(III)inamide-GDP = adenosylcob(III)alamin + GMP + H(+). It carries out the reaction alpha-ribazole 5'-phosphate + adenosylcob(III)inamide-GDP = adenosylcob(III)alamin 5'-phosphate + GMP + H(+). Its pathway is cofactor biosynthesis; adenosylcobalamin biosynthesis; adenosylcobalamin from cob(II)yrinate a,c-diamide: step 7/7. In terms of biological role, joins adenosylcobinamide-GDP and alpha-ribazole to generate adenosylcobalamin (Ado-cobalamin). Also synthesizes adenosylcobalamin 5'-phosphate from adenosylcobinamide-GDP and alpha-ribazole 5'-phosphate. The polypeptide is Adenosylcobinamide-GDP ribazoletransferase (Allorhizobium ampelinum (strain ATCC BAA-846 / DSM 112012 / S4) (Agrobacterium vitis (strain S4))).